The following is a 569-amino-acid chain: Synaptotagmin-4 (569 aa).

The helical transmembrane segment at 1-21 threads the bilayer; that stretch reads MGFLFGLFIGIAVSFGLVVAF. One can recognise an SMP-LTD domain in the interval 67-251; sequence QRQKLNWLNL…WPVRKIIPIL (185 aa). The segment at 229–531 is phospholipid binding; it reads EETIRDAIED…KIGRVIMTLT (303 aa). C2 domains follow at residues 245–366 and 426–543; these read RKII…DIWL and TDMK…QEWF. Residues D459, D465, D514, D516, and D521 each coordinate Ca(2+).

Belongs to the synaptotagmin family. Requires Ca(2+) as cofactor.

The protein localises to the membrane. In terms of biological role, may be involved in membrane trafficking. This Arabidopsis thaliana (Mouse-ear cress) protein is Synaptotagmin-4 (SYT4).